A 251-amino-acid chain; its full sequence is 5'-nucleotidase SurE (251 aa).

Residues aspartate 8, aspartate 9, serine 39, and asparagine 95 each coordinate a divalent metal cation.

It belongs to the SurE nucleotidase family. It depends on a divalent metal cation as a cofactor.

It is found in the cytoplasm. The enzyme catalyses a ribonucleoside 5'-phosphate + H2O = a ribonucleoside + phosphate. Its function is as follows. Nucleotidase that shows phosphatase activity on nucleoside 5'-monophosphates. The polypeptide is 5'-nucleotidase SurE (Clostridium botulinum (strain Alaska E43 / Type E3)).